The primary structure comprises 202 residues: UDP-N-acetylglucosamine transferase subunit ALG13 (202 aa).

It belongs to the glycosyltransferase 28 family. Heterodimer with ALG14 to form a functional enzyme.

The protein resides in the endoplasmic reticulum. It catalyses the reaction an N-acetyl-alpha-D-glucosaminyl-diphospho-di-trans,poly-cis-dolichol + UDP-N-acetyl-alpha-D-glucosamine = an N,N'-diacetylchitobiosyl-diphospho-di-trans,poly-cis-dolichol + UDP + H(+). In terms of biological role, involved in protein N-glycosylation. Essential for the second step of the dolichol-linked oligosaccharide pathway. This Saccharomyces cerevisiae (strain ATCC 204508 / S288c) (Baker's yeast) protein is UDP-N-acetylglucosamine transferase subunit ALG13 (ALG13).